Reading from the N-terminus, the 173-residue chain is NADH-ubiquinone oxidoreductase chain 6 (173 aa).

The next 5 helical transmembrane spans lie at 1–21 (MTYF…AVAS), 27–47 (YGVV…MSLG), 48–68 (MSFV…VVFV), 87–107 (VVGY…VGGL), and 139–159 (CGVG…FVVL).

The protein belongs to the complex I subunit 6 family.

The protein localises to the mitochondrion membrane. It catalyses the reaction a ubiquinone + NADH + 5 H(+)(in) = a ubiquinol + NAD(+) + 4 H(+)(out). Core subunit of the mitochondrial membrane respiratory chain NADH dehydrogenase (Complex I) that is believed to belong to the minimal assembly required for catalysis. Complex I functions in the transfer of electrons from NADH to the respiratory chain. The immediate electron acceptor for the enzyme is believed to be ubiquinone. This Synthliboramphus antiquus (Ancient murrelet) protein is NADH-ubiquinone oxidoreductase chain 6 (MT-ND6).